A 122-amino-acid polypeptide reads, in one-letter code: Large ribosomal subunit protein uL22c (122 aa).

This sequence belongs to the universal ribosomal protein uL22 family. In terms of assembly, part of the 50S ribosomal subunit.

It is found in the plastid. Its subcellular location is the chloroplast. Its function is as follows. This protein binds specifically to 23S rRNA. Functionally, the globular domain of the protein is located near the polypeptide exit tunnel on the outside of the subunit, while an extended beta-hairpin is found that lines the wall of the exit tunnel in the center of the 70S ribosome. This Adiantum capillus-veneris (Maidenhair fern) protein is Large ribosomal subunit protein uL22c (rpl22).